Here is a 541-residue protein sequence, read N- to C-terminus: MGHSPPVLPLCASVSLLGGLTFGYELAVISGALLPLQLDFGLSCLEQEFLVGSLLLGALLASLVGGFLIDCYGRKQAILGSNLVLLAGSLTLGLAGSLAWLVLGRAVVGFAISLSSMACCIYVSELVGPRQRGVLVSLYEAGITVGILLSYALNYALAGTPWGWRHMFGWATAPAVLQSLSLLFLPAGTDETATHKDLIPLQGGEAPKLGPGRPRYSFLDLFRARDNMRGRTTVGLGLVLFQQLTGQPNVLCYASTIFSSVGFHGGSSAVLASVGLGAVKVAATLTAMGLVDRAGRRALLLAGCALMALSVSGIGLVSFAVPMDSGPSCLAVPNATGQTGLPGDSGLLQDSSLPPIPRTNEDQREPILSTAKKTKPHPRSGDPSAPPRLALSSALPGPPLPARGHALLRWTALLCLMVFVSAFSFGFGPVTWLVLSEIYPVEIRGRAFAFCNSFNWAANLFISLSFLDLIGTIGLSWTFLLYGLTAVLGLGFIYLFVPETKGQSLAEIDQQFQKRRFTLSFGHRQNSTGIPYSRIEISAAS.

At 1–15 the chain is on the cytoplasmic side; sequence MGHSPPVLPLCASVS. Residues 16 to 36 traverse the membrane as a helical segment; that stretch reads LLGGLTFGYELAVISGALLPL. Over 37 to 48 the chain is Extracellular; sequence QLDFGLSCLEQE. A helical transmembrane segment spans residues 49 to 69; it reads FLVGSLLLGALLASLVGGFLI. At 70–77 the chain is on the cytoplasmic side; that stretch reads DCYGRKQA. A helical membrane pass occupies residues 78-98; sequence ILGSNLVLLAGSLTLGLAGSL. Residues 99 to 106 are Extracellular-facing; the sequence is AWLVLGRA. Residues 107–127 form a helical membrane-spanning segment; that stretch reads VVGFAISLSSMACCIYVSELV. Residues 128–134 lie on the Cytoplasmic side of the membrane; sequence GPRQRGV. A helical membrane pass occupies residues 135-155; sequence LVSLYEAGITVGILLSYALNY. At 156 to 166 the chain is on the extracellular side; the sequence is ALAGTPWGWRH. Residues 167–187 traverse the membrane as a helical segment; the sequence is MFGWATAPAVLQSLSLLFLPA. Residues 188–233 lie on the Cytoplasmic side of the membrane; sequence GTDETATHKDLIPLQGGEAPKLGPGRPRYSFLDLFRARDNMRGRTT. The chain crosses the membrane as a helical span at residues 234–254; it reads VGLGLVLFQQLTGQPNVLCYA. 242 to 243 contributes to the D-glucose binding site; it reads QQ. The Extracellular portion of the chain corresponds to 255-269; that stretch reads STIFSSVGFHGGSSA. A helical transmembrane segment spans residues 270 to 290; sequence VLASVGLGAVKVAATLTAMGL. Over 291–298 the chain is Cytoplasmic; sequence VDRAGRRA. Residues 299 to 319 form a helical membrane-spanning segment; sequence LLLAGCALMALSVSGIGLVSF. The Extracellular segment spans residues 320–414; the sequence is AVPMDSGPSC…HALLRWTALL (95 aa). Asn-334 carries an N-linked (GlcNAc...) asparagine glycan. Positions 340 to 388 are disordered; the sequence is GLPGDSGLLQDSSLPPIPRTNEDQREPILSTAKKTKPHPRSGDPSAPPR. Residues 415–435 traverse the membrane as a helical segment; that stretch reads CLMVFVSAFSFGFGPVTWLVL. A D-glucose-binding site is contributed by Trp-432. Over 436-445 the chain is Cytoplasmic; sequence SEIYPVEIRG. A helical transmembrane segment spans residues 446 to 466; sequence RAFAFCNSFNWAANLFISLSF. The Extracellular segment spans residues 467 to 476; that stretch reads LDLIGTIGLS. The chain crosses the membrane as a helical span at residues 477–497; sequence WTFLLYGLTAVLGLGFIYLFV. The Cytoplasmic portion of the chain corresponds to 498 to 541; sequence PETKGQSLAEIDQQFQKRRFTLSFGHRQNSTGIPYSRIEISAAS.

Belongs to the major facilitator superfamily. Sugar transporter (TC 2.A.1.1) family. Glucose transporter subfamily. In terms of tissue distribution, widely expressed; highest levels in liver and pancreas.

The protein localises to the endomembrane system. It localises to the cytoplasm. Its subcellular location is the perinuclear region. It catalyses the reaction D-glucose(out) = D-glucose(in). Facilitative glucose transporter required for the development of the cardiovascular system. This is Solute carrier family 2, facilitated glucose transporter member 10 from Homo sapiens (Human).